We begin with the raw amino-acid sequence, 377 residues long: Metallo-hydrolase mfmC (377 aa).

Zn(2+) is bound by residues His126, His128, Asp130, His131, His209, and Asp233.

Belongs to the metallo-beta-lactamase superfamily.

It functions in the pathway secondary metabolite biosynthesis; terpenoid biosynthesis. Functionally, metallo-hydrolase; part of the gene cluster that mediates the biosynthesis of the phthalide-terpenoid hybrid 11'-O-desmethylfendlerol. Within the pathway, mfma and mfmC act together to convert 3,5-dimethylorsellinic acid (DMOA) into the phthalide 5,7-dihydroxy-4-(hydroxymethyl)-6-methylphthalide. The biosynthesis of 11'-O-desmethylfendlerol begins with the NR-PKS mfmB that forms 3,5-dimethylorsellinic acid (DMOA), which is then transformed into the phthalide 5,7-dihydroxy-4-(hydroxymethyl)-6-methylphthalide by the cytochrome P450 monooxygenase mfmA and the hydrolase mfmC. Subsequently, the methyltransferase mfmE catalyzes 7-O-methylation to yield 5-hydroxy-4-(hydroxymethyl)-7-methoxy-6-methylphthalide, which undergoes C-3 hydroxylation by the cytochrome P450 monooxygenase mfmF. The resultant cyclopolic acid (2,5-dihydroxy-4-(hydroxymethyl)-7-methoxy-6-methylphthalide) is then farnesylated by the DMATS-type prenyltransferase mfmD to afford 5-O-farnesylcyclopolic acid. Finally, the Pyr4-family terpene cyclase mfmH cyclizes the farnesyl moiety of 5-O-farnesylcyclopolic acid into a drimane-like structure, thus completing the biosynthesis of 11'-O-desmethylfendlerol. The sequence is that of Metallo-hydrolase mfmC from Annulohypoxylon moriforme (Filamentous fungus).